Consider the following 1777-residue polypeptide: MQEESANDMECEQLPAEILRQVTVHRDPIYGFGFVAGSERPVVVRSVRPGGPSENKLLAGDQIVAINEEDVSEAPRERLIELIRSAKEFIVLTVLHTHQSPKSAFISAAKKAKLRSNPVKVRFSEQVAVGETDAKMMKKEALLLIPNVLKVFLENGQIKSFTFDGRTTVKDVMLTLQDRLSLRFIEHFALVLEYAGPEQNHKFLLLQDKQPLAYVVQRTHYHGMKCLFRISFFPKDPVELLRRDPAAFEYLYIQSRNDVIRERFGMDPKPEMLLGLAALHIYITVSATRPSQKISLKNVEKEWGLEPFLPPSLLQVIKEKNLRKSLSQQLKAHQTHPSCGTKGSAIQAKLQYLRILNELPTFTGVLFNTVGLDEKQSATTLLVGPRHGISHVIDLKTNLTTVLSEFSKISKIQLFRENQGVARVETSIMDAKPLVLLMEWPEATNFACLIAGYCRLLLDSRKMVFSRPASQPLPPPMIKADYMHSAHRPVTGGHLGKKESSYVGSVGTSPRKSSRCTPPPADSELVSFCYLHMREQRKEQESRTDVNENLIFFEETRPRTKSDPTSKSSGQGYEVVPDDFDAASLDHEPCASRARSYTLDNSLGAEALNFYCDSCKAKLQEQLGPRKGGKPGSSRDNIVDLMSLPPPGSEEEEEEEDETTSLLPAIAAPPPGFRDNSSDEDDPKRRAVQSQEQGRHLRGLLYDEIPVTLIDSVQTRTVRDHAQELDDALVSTLQALEALAASEDGPHPPPPQTAGLIVLATITPESSLDSGHETNSSELTDMSEMMSAMKQHQNTTYFLAQHLNKDSLLARKDLPFRIQSCAAQAVLTAPYSLGRPDPNPSLQPIATGQSPGPPGARRKLPQSEGQVQGERTYSLAVHPALSPQLSEQKNLSLLSPVPEDKGPGHTRAGLEMSLRAATSSLSEEQVSELRDNLPKEVRLSPKLILDPKSSVTPAIISAALQQVVHNKSLVTAGGALGNPPSRGERRLEASMGRPEVSMMSSSASKNLKFKISPSAPETSWNSQHQLGAEVSSSPRAPTGSRADSLHLSQQEDSLPVQNFPPKSYLLRTSRESVGKQATGEVAGKGGPVGGKPTLQKQGTISSQGEKAQLESTPKRSKLEETSLVPRATYPMALQSPSCQSRSHSPSCQPHGHSPSSQSRGQSPSCQPRGQSPLRSQAASRQVSTMPSRKLETTLNGAHSTSEGPAKPKSSRGPFRLRNLFSATFPTRQKKETDERQAQLQKVKQYELEFLEELLKPPSQGELPGTEYLQPPAPGRCSCQLRSSPVQQGPGMSREQRRSCDCKRICRGGRPQATQTPVPSLRGRERDRVLPSQRQPEAGPGVSLSSPINVQRIRSTSLESRECRSDPESGVSCLTTCASGGECLGAPNYRKLMRRYSISELDQGDRASLTSDVYPHPPLGMLPREAKEVEASLPIALGPKSRSLESPTLGDPSYVQVAPETKGPRQMAVFSLPEEVYRKPAELDEDSESSKCCSIRYCFYYRKCDMADDASDGKDELSYSIPMKILPGMKLDEQVVPVVSRTLQVLDAATCSSSSPEASRTQEIDLRVSTFEGSLAKINALRAHAYGLPDGFLAARLDTNELLTVLRQCVASPEARAPKPYVSQISEYKLELALKFKELRASCRRVANVDKSPTHMLAAITGSFQVLSSLIETFVRLVFIVRSEAQRQELLAKVEEVVRNYTFLLRAAEESTARNLNQQQQQQQQQQQQQQQQQQQQQQQQQQQVAAAAGAATEHPPGSPTSATVMSTFTHSLKTLIK.

A PDZ domain is found at 21-98 (QVTVHRDPIY…FIVLTVLHTH (78 aa)). Positions 147–461 (NVLKVFLENG…GYCRLLLDSR (315 aa)) constitute an FERM domain. 7 disordered regions span residues 491-520 (TGGH…TPPP), 555-574 (ETRP…QGYE), 622-697 (QLGP…GRHL), 832-871 (SLGR…QGER), 1014-1216 (SAPE…PFRL), 1309-1346 (RPQA…LSSP), and 1732-1765 (QQQQ…ATVM). Residues 502 to 511 (YVGSVGTSPR) are compositionally biased toward polar residues. The span at 555 to 564 (ETRPRTKSDP) shows a compositional bias: basic and acidic residues. A compositionally biased stretch (acidic residues) spans 649 to 659 (SEEEEEEEDET). Polar residues-rich tracts occupy residues 840 to 850 (PSLQPIATGQS), 1015 to 1035 (APET…SSPR), 1046 to 1056 (HLSQQEDSLPV), and 1094 to 1111 (LQKQ…QLES). Low complexity predominate over residues 1134 to 1168 (QSPSCQSRSHSPSCQPHGHSPSSQSRGQSPSCQPR). Residues 1172-1202 (PLRSQAASRQVSTMPSRKLETTLNGAHSTSE) are compositionally biased toward polar residues. Residues 1732 to 1751 (QQQQQQQQQQQQVAAAAGAA) show a composition bias toward low complexity.

The chain is FERM and PDZ domain-containing protein 3 from Homo sapiens (Human).